Consider the following 360-residue polypeptide: Histidinol-phosphate aminotransferase (360 aa).

N6-(pyridoxal phosphate)lysine is present on lysine 208.

The protein belongs to the class-II pyridoxal-phosphate-dependent aminotransferase family. Histidinol-phosphate aminotransferase subfamily. As to quaternary structure, homodimer. Pyridoxal 5'-phosphate is required as a cofactor.

The catalysed reaction is L-histidinol phosphate + 2-oxoglutarate = 3-(imidazol-4-yl)-2-oxopropyl phosphate + L-glutamate. It participates in amino-acid biosynthesis; L-histidine biosynthesis; L-histidine from 5-phospho-alpha-D-ribose 1-diphosphate: step 7/9. This chain is Histidinol-phosphate aminotransferase (hisC), found in Lactococcus lactis subsp. lactis (strain IL1403) (Streptococcus lactis).